The chain runs to 359 residues: Biotin synthase (359 aa).

The region spanning 67–302 is the Radical SAM core domain; sequence CCGNRVDLCS…QQILRYAGGR (236 aa). Residues Cys-85, Cys-89, and Cys-92 each contribute to the [4Fe-4S] cluster site. [2Fe-2S] cluster is bound by residues Cys-130, Cys-167, Cys-227, and Arg-297.

Belongs to the radical SAM superfamily. Biotin synthase family. As to quaternary structure, homodimer. [4Fe-4S] cluster is required as a cofactor. It depends on [2Fe-2S] cluster as a cofactor.

The catalysed reaction is (4R,5S)-dethiobiotin + (sulfur carrier)-SH + 2 reduced [2Fe-2S]-[ferredoxin] + 2 S-adenosyl-L-methionine = (sulfur carrier)-H + biotin + 2 5'-deoxyadenosine + 2 L-methionine + 2 oxidized [2Fe-2S]-[ferredoxin]. It participates in cofactor biosynthesis; biotin biosynthesis; biotin from 7,8-diaminononanoate: step 2/2. Functionally, catalyzes the conversion of dethiobiotin (DTB) to biotin by the insertion of a sulfur atom into dethiobiotin via a radical-based mechanism. The protein is Biotin synthase of Gloeothece citriformis (strain PCC 7424) (Cyanothece sp. (strain PCC 7424)).